A 588-amino-acid polypeptide reads, in one-letter code: Pre-mRNA 3'-end-processing factor FIP1 (588 aa).

Over residues 1–10 (MSAGEVERLV) the composition is skewed to basic and acidic residues. Disordered stretches follow at residues 1 to 81 (MSAG…EDDV), 223 to 291 (QGRT…ESPD), and 334 to 588 (VDNN…TPAE). Residues 1 to 96 (MSAGEVERLV…DIKTGAPQYG (96 aa)) are sufficient for interaction with PAPOLA. The segment at 1–341 (MSAGEVERLV…TAVDNNFSKP (341 aa)) is necessary for stimulating PAPOLA activity. Composition is skewed to acidic residues over residues 19–40 (GDEE…EEEN) and 66–80 (TEDD…DEDD). Residues Ser-70, Ser-72, and Ser-74 each carry the phosphoserine modification. The sufficient for interaction with CPSF4 stretch occupies residues 122 to 228 (KGVDLDAPGS…FKVQQGRTGN (107 aa)). Low complexity predominate over residues 259–270 (STSSQSQTSTAS). Over residues 280 to 291 (WQDRYGRAESPD) the composition is skewed to basic and acidic residues. Ser-289 is subject to Phosphoserine. A compositionally biased stretch (pro residues) spans 340–398 (KPPPFFPPGAPPTHLPPPPFLPPPPTVSTAPPLIPPPGIPITVPPPGFPPPPGAPPPSL). At Tyr-420 the chain carries Phosphotyrosine. Residues 437-588 (SLVDTSKQWD…QESTEATPAE (152 aa)) form a sufficient for interaction with CPSF1 and CSTF3 region. Residues 448–486 (YARREKDRDRERDRDRERDRDRDRERERTRERERERDHS) show a composition bias toward basic and acidic residues. An arg/Asp/Glu-rich domain region spans residues 451-484 (REKDRDRERDRDRERDRDRDRERERTRERERERD). Ser-486 is subject to Phosphoserine. Thr-488 is modified (phosphothreonine). Ser-490 and Ser-494 each carry phosphoserine. Residues 495 to 522 (DEERYRYREYAERGYERHRASREKEERH) show a composition bias toward basic and acidic residues. Over residues 536 to 545 (KSSRSNSRRR) the composition is skewed to basic residues. The residue at position 548 (Ser-548) is a Phosphoserine. Positions 554-564 (HRRHKHKKSKR) are enriched in basic residues.

The protein belongs to the FIP1 family. Component of the cleavage and polyadenylation specificity factor (CPSF) complex, composed of CPSF1, CPSF2, CPSF3, CPSF4 and FIP1L1. Found in a complex with CPSF1, FIP1L1 and PAPOLA. Interacts with CPSF1, CPSF4, CSTF2 and CSTF3. Interacts with AHCYL1 (when phosphorylated); the interaction is direct and associates AHCYL1 with the CPSF complex and RNA. Interacts with PAPOLA; the interaction seems to be increased by the interaction with AHCYL1. Interacts with NUDT21/CPSF5; this interaction occurs in a RNA sequence-specific manner. Interacts (preferentially via unphosphorylated form and Arg/Glu/Asp-rich domain) with CPSF6 (via Arg/Ser-rich domain); this interaction mediates, at least in part, the interaction between the CFIm and CPSF complexes and may be inhibited by CPSF6 hyper-phosphorylation. Interacts (preferentially via unphosphorylated form and Arg/Asp/Glu-rich domain) with CPSF7 (via Arg/Ser-rich domain); this interaction mediates, at least in part, the interaction between the CFIm and CPSF complexes and may be inhibited by CPSF7 hyper-phosphorylation.

Its subcellular location is the nucleus. Its function is as follows. Component of the cleavage and polyadenylation specificity factor (CPSF) complex that plays a key role in pre-mRNA 3'-end formation, recognizing the AAUAAA signal sequence and interacting with poly(A) polymerase and other factors to bring about cleavage and poly(A) addition. FIP1L1 contributes to poly(A) site recognition and stimulates poly(A) addition. Binds to U-rich RNA sequence elements surrounding the poly(A) site. May act to tether poly(A) polymerase to the CPSF complex. The polypeptide is Pre-mRNA 3'-end-processing factor FIP1 (FIP1L1) (Pongo abelii (Sumatran orangutan)).